The sequence spans 144 residues: Large ribosomal subunit protein uL15 (144 aa).

Residues 1 to 52 (MRLNTLSPAEGAKHSAKRLGRGIGSGLGKTGGRGHKGQKSRTGSGVRRGFEG) form a disordered region. The segment covering 21–31 (RGIGSGLGKTG) has biased composition (gly residues).

Belongs to the universal ribosomal protein uL15 family. As to quaternary structure, part of the 50S ribosomal subunit.

Its function is as follows. Binds to the 23S rRNA. The sequence is that of Large ribosomal subunit protein uL15 from Haemophilus influenzae (strain 86-028NP).